The chain runs to 217 residues: Photosynthetic NDH subunit of lumenal location 4, chloroplastic (217 aa).

The N-terminal 34 residues, 1-34 (MAISTLTLTQSLYTRSFRPTIFFSSSSSSSFSCL), are a transit peptide targeting the chloroplast. 2 cysteine pairs are disulfide-bonded: cysteine 87–cysteine 99 and cysteine 188–cysteine 193. The PPIase FKBP-type domain maps to 112–211 (GVLVNIHYTA…LYDINFVEIY (100 aa)).

This sequence belongs to the FKBP-type PPIase family. Part of the chloroplast NDH complex, composed of a mixture of chloroplast and nucleus encoded subunits. Component of the NDH lumenal subcomplex, at least composed of PnsL1, PnsL2, PnsL3, PnsL4 and PnsL5.

It is found in the plastid. The protein localises to the chloroplast thylakoid lumen. The enzyme catalyses [protein]-peptidylproline (omega=180) = [protein]-peptidylproline (omega=0). In terms of biological role, NDH shuttles electrons from NAD(P)H:plastoquinone, via FMN and iron-sulfur (Fe-S) centers, to quinones in the photosynthetic chain and possibly in a chloroplast respiratory chain. The immediate electron acceptor for the enzyme in this species is believed to be plastoquinone. Couples the redox reaction to proton translocation, and thus conserves the redox energy in a proton gradient. PPIases accelerate the folding of proteins. It catalyzes the cis-trans isomerization of proline imidic peptide bonds in oligopeptides. Seems to be essential for stabilizing the NDH subcomplex A. The protein is Photosynthetic NDH subunit of lumenal location 4, chloroplastic of Arabidopsis thaliana (Mouse-ear cress).